Here is a 208-residue protein sequence, read N- to C-terminus: V-type ATP synthase subunit D (208 aa).

The protein belongs to the V-ATPase D subunit family.

Produces ATP from ADP in the presence of a proton gradient across the membrane. The polypeptide is V-type ATP synthase subunit D (Streptococcus pyogenes serotype M1).